Consider the following 172-residue polypeptide: Trypsin inhibitor 1A (172 aa).

Intrachain disulfides connect Cys-40–Cys-84 and Cys-133–Cys-139.

The protein belongs to the protease inhibitor I3 (leguminous Kunitz-type inhibitor) family.

In terms of biological role, WTI-1B inhibits trypsin stoichiometrically. In Psophocarpus tetragonolobus (Winged bean), this protein is Trypsin inhibitor 1A.